Here is a 156-residue protein sequence, read N- to C-terminus: UPF0756 membrane protein Exig_2210 (156 aa).

5 helical membrane passes run 5 to 25 (LFLI…LIIA), 52 to 72 (WGVT…DIGF), 83 to 103 (IGII…HGVG), 109 to 129 (PLVT…FRGV), and 131 to 151 (VGPL…DIIV).

The protein belongs to the UPF0756 family.

It localises to the cell membrane. The polypeptide is UPF0756 membrane protein Exig_2210 (Exiguobacterium sibiricum (strain DSM 17290 / CCUG 55495 / CIP 109462 / JCM 13490 / 255-15)).